Consider the following 224-residue polypeptide: Phosphoribosylformylglycinamidine synthase subunit PurQ (224 aa).

The Glutamine amidotransferase type-1 domain maps to 2-224 (KFAVIQFPGS…SILNHAEVKA (223 aa)). Residue cysteine 86 is the Nucleophile of the active site. Active-site residues include histidine 195 and glutamate 197.

As to quaternary structure, part of the FGAM synthase complex composed of 1 PurL, 1 PurQ and 2 PurS subunits.

The protein resides in the cytoplasm. The catalysed reaction is N(2)-formyl-N(1)-(5-phospho-beta-D-ribosyl)glycinamide + L-glutamine + ATP + H2O = 2-formamido-N(1)-(5-O-phospho-beta-D-ribosyl)acetamidine + L-glutamate + ADP + phosphate + H(+). It catalyses the reaction L-glutamine + H2O = L-glutamate + NH4(+). It functions in the pathway purine metabolism; IMP biosynthesis via de novo pathway; 5-amino-1-(5-phospho-D-ribosyl)imidazole from N(2)-formyl-N(1)-(5-phospho-D-ribosyl)glycinamide: step 1/2. In terms of biological role, part of the phosphoribosylformylglycinamidine synthase complex involved in the purines biosynthetic pathway. Catalyzes the ATP-dependent conversion of formylglycinamide ribonucleotide (FGAR) and glutamine to yield formylglycinamidine ribonucleotide (FGAM) and glutamate. The FGAM synthase complex is composed of three subunits. PurQ produces an ammonia molecule by converting glutamine to glutamate. PurL transfers the ammonia molecule to FGAR to form FGAM in an ATP-dependent manner. PurS interacts with PurQ and PurL and is thought to assist in the transfer of the ammonia molecule from PurQ to PurL. In Lactobacillus delbrueckii subsp. bulgaricus (strain ATCC 11842 / DSM 20081 / BCRC 10696 / JCM 1002 / NBRC 13953 / NCIMB 11778 / NCTC 12712 / WDCM 00102 / Lb 14), this protein is Phosphoribosylformylglycinamidine synthase subunit PurQ.